A 369-amino-acid chain; its full sequence is Glycine oxidase (369 aa).

FAD is bound by residues isoleucine 14–isoleucine 15, glutamate 34–serine 35, alanine 42–threonine 43, alanine 47–methionine 49, and valine 174. Substrate contacts are provided by arginine 302 and arginine 329. Residue histidine 327–leucine 333 coordinates FAD.

It belongs to the DAO family. ThiO subfamily. Homotetramer. The cofactor is FAD.

The catalysed reaction is glycine + O2 + H2O = glyoxylate + H2O2 + NH4(+). It catalyses the reaction glyphosate + O2 + H2O = aminomethylphosphonate + glyoxylate + H2O2 + H(+). It carries out the reaction N-ethylglycine + O2 + H2O = ethylamine + glyoxylate + H2O2. The enzyme catalyses sarcosine + O2 + H2O = methylamine + glyoxylate + H2O2. The catalysed reaction is D-alanine + O2 + H2O = pyruvate + H2O2 + NH4(+). It functions in the pathway cofactor biosynthesis; thiamine diphosphate biosynthesis. In terms of biological role, catalyzes the FAD-dependent oxidative deamination of glycine, leading to glyoxylate, ammonia and hydrogen peroxide. Is also able to act on various amines and D-amino acids to yield the corresponding alpha-keto acids, ammonia/amine, and hydrogen peroxide. Can also oxidize the herbicide glyphosate (N-phosphonomethylglycine), and thus may be involved in the degradation pathway that allows B.licheniformis J33-8 to grow with glyphosate as the sole source of carbon. Is essential for thiamine biosynthesis since the oxidation of glycine catalyzed by ThiO generates the glycine imine intermediate (dehydroglycine) required for the biosynthesis of the thiazole ring of thiamine pyrophosphate. The chain is Glycine oxidase from Bacillus licheniformis.